The following is a 284-amino-acid chain: uncharacterized protein (284 aa).

It to E.coli YnjA.

This is an uncharacterized protein from Mycobacterium tuberculosis (strain CDC 1551 / Oshkosh).